Consider the following 328-residue polypeptide: uncharacterized protein (328 aa).

The signal sequence occupies residues 1–24; that stretch reads MKSIKGLGKLLLASSILFSSSAFA.

This sequence belongs to the bacterial solute-binding protein 7 family.

It is found in the periplasm. This is an uncharacterized protein from Haemophilus influenzae (strain ATCC 51907 / DSM 11121 / KW20 / Rd).